A 200-amino-acid polypeptide reads, in one-letter code: ATP-dependent Clp protease proteolytic subunit (200 aa).

Residue Ser105 is the Nucleophile of the active site. The active site involves His130.

This sequence belongs to the peptidase S14 family. Fourteen ClpP subunits assemble into 2 heptameric rings which stack back to back to give a disk-like structure with a central cavity, resembling the structure of eukaryotic proteasomes.

The protein localises to the cytoplasm. It catalyses the reaction Hydrolysis of proteins to small peptides in the presence of ATP and magnesium. alpha-casein is the usual test substrate. In the absence of ATP, only oligopeptides shorter than five residues are hydrolyzed (such as succinyl-Leu-Tyr-|-NHMec, and Leu-Tyr-Leu-|-Tyr-Trp, in which cleavage of the -Tyr-|-Leu- and -Tyr-|-Trp bonds also occurs).. Its function is as follows. Cleaves peptides in various proteins in a process that requires ATP hydrolysis. Has a chymotrypsin-like activity. Plays a major role in the degradation of misfolded proteins. This is ATP-dependent Clp protease proteolytic subunit from Hydrogenovibrio crunogenus (strain DSM 25203 / XCL-2) (Thiomicrospira crunogena).